The following is a 572-amino-acid chain: Periplasmic pectate lyase (572 aa).

An N-terminal signal peptide occupies residues 1–23 (MKKRALLLSMSVLAMLYIPAGQA).

This sequence belongs to the polysaccharide lyase 2 family.

The protein resides in the periplasm. It catalyses the reaction Eliminative cleavage of (1-&gt;4)-alpha-D-galacturonan to give oligosaccharides with 4-deoxy-alpha-D-galact-4-enuronosyl groups at their non-reducing ends.. It functions in the pathway glycan metabolism; pectin degradation; 2-dehydro-3-deoxy-D-gluconate from pectin: step 2/5. This is Periplasmic pectate lyase (pelY) from Yersinia pseudotuberculosis serotype I (strain IP32953).